The sequence spans 310 residues: Quinolinate synthase 2 (310 aa).

His30 and Ser47 together coordinate iminosuccinate. Residue Cys92 participates in [4Fe-4S] cluster binding. Iminosuccinate contacts are provided by residues 118–120 and Ser135; that span reads YVN. Cys177 is a binding site for [4Fe-4S] cluster. Residues 203–205 and Thr220 contribute to the iminosuccinate site; that span reads HPE. Cys265 provides a ligand contact to [4Fe-4S] cluster.

This sequence belongs to the quinolinate synthase family. Type 2 subfamily. It depends on [4Fe-4S] cluster as a cofactor.

Its subcellular location is the cytoplasm. It carries out the reaction iminosuccinate + dihydroxyacetone phosphate = quinolinate + phosphate + 2 H2O + H(+). Its pathway is cofactor biosynthesis; NAD(+) biosynthesis; quinolinate from iminoaspartate: step 1/1. In terms of biological role, catalyzes the condensation of iminoaspartate with dihydroxyacetone phosphate to form quinolinate. The chain is Quinolinate synthase 2 from Methanosarcina acetivorans (strain ATCC 35395 / DSM 2834 / JCM 12185 / C2A).